We begin with the raw amino-acid sequence, 145 residues long: MSDSSKTNQCCPTPCCPPKPCCPPKPCCLQKSPCCPKSPCCPPKSPCCTPKVCPCPTPCPCPATCPAACACPCPMKPCCPTKCTCCPKKCTCCPQPTCCVQPTCCSSENKTESDSDGSGQTQDRGAQTQQSPQGGQGNWNQKKTK.

Phosphoserine occurs at positions 38, 45, 113, and 131. Positions 105–145 (CSSENKTESDSDGSGQTQDRGAQTQQSPQGGQGNWNQKKTK) are disordered. Residues 116-145 (DGSGQTQDRGAQTQQSPQGGQGNWNQKKTK) show a composition bias toward polar residues.

As to expression, testis. Selectively expressed in the spermatids of seminiferous tubules and in flagella of epididymal sperm.

The protein localises to the cytoplasm. It localises to the mitochondrion membrane. Its function is as follows. Involved in sperm motility. Its absence is associated with genetic background dependent male infertility. Infertility may be due to reduced sperm motility in the female reproductive tract and inability to penetrate the oocyte zona pellucida. The polypeptide is Sperm mitochondrial-associated cysteine-rich protein (Smcp) (Rattus norvegicus (Rat)).